The sequence spans 412 residues: Multifunctional CCA protein (412 aa).

ATP is bound by residues Gly-8 and Arg-11. Positions 8 and 11 each coordinate CTP. Asp-21 and Asp-23 together coordinate Mg(2+). Residues Arg-91, Arg-137, and Arg-140 each contribute to the ATP site. 3 residues coordinate CTP: Arg-91, Arg-137, and Arg-140. Residues Thr-228–Trp-329 form the HD domain.

It belongs to the tRNA nucleotidyltransferase/poly(A) polymerase family. Bacterial CCA-adding enzyme type 1 subfamily. In terms of assembly, monomer. Can also form homodimers and oligomers. Mg(2+) serves as cofactor. It depends on Ni(2+) as a cofactor.

It catalyses the reaction a tRNA precursor + 2 CTP + ATP = a tRNA with a 3' CCA end + 3 diphosphate. The catalysed reaction is a tRNA with a 3' CCA end + 2 CTP + ATP = a tRNA with a 3' CCACCA end + 3 diphosphate. Functionally, catalyzes the addition and repair of the essential 3'-terminal CCA sequence in tRNAs without using a nucleic acid template. Adds these three nucleotides in the order of C, C, and A to the tRNA nucleotide-73, using CTP and ATP as substrates and producing inorganic pyrophosphate. tRNA 3'-terminal CCA addition is required both for tRNA processing and repair. Also involved in tRNA surveillance by mediating tandem CCA addition to generate a CCACCA at the 3' terminus of unstable tRNAs. While stable tRNAs receive only 3'-terminal CCA, unstable tRNAs are marked with CCACCA and rapidly degraded. The polypeptide is Multifunctional CCA protein (Escherichia coli (strain K12 / MC4100 / BW2952)).